A 212-amino-acid polypeptide reads, in one-letter code: Thymidylate kinase (212 aa).

15–22 (GIDGAGKS) serves as a coordination point for ATP.

This sequence belongs to the thymidylate kinase family.

The catalysed reaction is dTMP + ATP = dTDP + ADP. In terms of biological role, phosphorylation of dTMP to form dTDP in both de novo and salvage pathways of dTTP synthesis. The protein is Thymidylate kinase of Chromobacterium violaceum (strain ATCC 12472 / DSM 30191 / JCM 1249 / CCUG 213 / NBRC 12614 / NCIMB 9131 / NCTC 9757 / MK).